A 298-amino-acid polypeptide reads, in one-letter code: Lipoyl synthase (298 aa).

7 residues coordinate [4Fe-4S] cluster: cysteine 40, cysteine 45, cysteine 51, cysteine 67, cysteine 71, cysteine 74, and serine 280. The 217-residue stretch at 53-269 (AVRKTATFMI…KEIALSKGFS (217 aa)) folds into the Radical SAM core domain.

Belongs to the radical SAM superfamily. Lipoyl synthase family. [4Fe-4S] cluster is required as a cofactor.

The protein resides in the cytoplasm. It carries out the reaction [[Fe-S] cluster scaffold protein carrying a second [4Fe-4S](2+) cluster] + N(6)-octanoyl-L-lysyl-[protein] + 2 oxidized [2Fe-2S]-[ferredoxin] + 2 S-adenosyl-L-methionine + 4 H(+) = [[Fe-S] cluster scaffold protein] + N(6)-[(R)-dihydrolipoyl]-L-lysyl-[protein] + 4 Fe(3+) + 2 hydrogen sulfide + 2 5'-deoxyadenosine + 2 L-methionine + 2 reduced [2Fe-2S]-[ferredoxin]. Its pathway is protein modification; protein lipoylation via endogenous pathway; protein N(6)-(lipoyl)lysine from octanoyl-[acyl-carrier-protein]. Functionally, catalyzes the radical-mediated insertion of two sulfur atoms into the C-6 and C-8 positions of the octanoyl moiety bound to the lipoyl domains of lipoate-dependent enzymes, thereby converting the octanoylated domains into lipoylated derivatives. The sequence is that of Lipoyl synthase from Bacillus anthracis (strain A0248).